Here is a 113-residue protein sequence, read N- to C-terminus: Large ribosomal subunit protein uL24 (113 aa).

Belongs to the universal ribosomal protein uL24 family. As to quaternary structure, part of the 50S ribosomal subunit.

Its function is as follows. One of two assembly initiator proteins, it binds directly to the 5'-end of the 23S rRNA, where it nucleates assembly of the 50S subunit. One of the proteins that surrounds the polypeptide exit tunnel on the outside of the subunit. This Rickettsia typhi (strain ATCC VR-144 / Wilmington) protein is Large ribosomal subunit protein uL24.